A 540-amino-acid chain; its full sequence is PTS system alpha-glucoside-specific EIICB component (540 aa).

Residues 1–420 enclose the PTS EIIC type-1 domain; that stretch reads MLSQIQRFGG…LNLKTPGREE (420 aa). Transmembrane regions (helical) follow at residues 12–32, 87–107, 130–150, 174–194, 201–221, 225–245, 277–297, 307–327, 329–349, 352–372, and 384–404; these read MFTP…AIML, ACLA…AMGM, IAGI…SGLV, FVVI…LLGW, IESL…VYIF, ILIP…GPAV, FALH…ALYF, VAGL…TEPL, FTFL…AATM, VMYI…QFLP, and SMMF…FVVF. Positions 448–530 constitute a PTS EIIB type-1 domain; it reads LGQAAGFLQA…ENLMKDSLST (83 aa). Cysteine 470 functions as the Phosphocysteine intermediate; for EIIB activity in the catalytic mechanism.

The protein resides in the cell membrane. Its function is as follows. The phosphoenolpyruvate-dependent sugar phosphotransferase system (sugar PTS), a major carbohydrate active -transport system, catalyzes the phosphorylation of incoming sugar substrates concomitantly with their translocation across the cell membrane. This system is involved in alpha-glucoside transport. Involved in the transport and simultaneous phosphorylation at O-6 of the glucosyl moiety of sucrose and its five linkage-isomeric alpha-D-glucosyl-D-fructoses. Can also transport maltose, isomaltose and maltitol, phosphorylating at O-6 of their non-reducing glucose portion. In Klebsiella pneumoniae, this protein is PTS system alpha-glucoside-specific EIICB component (aglA).